We begin with the raw amino-acid sequence, 309 residues long: Vacuolar membrane protein YOR292C (309 aa).

The Vacuolar segment spans residues 1-52 (MPLQLFGRDQIVVHYDNGNMSNDDQNHQSVLGSWTRRAAAALRTLMNKRIQR). Asparagine 19 is a glycosylation site (N-linked (GlcNAc...) asparagine). A helical transmembrane segment spans residues 53 to 73 (ITLTHWLLLVIWVTSLWKFTS). Residues 74-81 (HYRQLYAN) lie on the Cytoplasmic side of the membrane. A helical transmembrane segment spans residues 82-102 (SAVFATLCTNILLFGISDILA). The Vacuolar segment spans residues 103 to 183 (QSIACFYSYH…KTDTFDFFRW (81 aa)). The N-linked (GlcNAc...) asparagine glycan is linked to asparagine 121. Residues 184-204 (GCFMFWGFFISFFQAPWYKFL) traverse the membrane as a helical segment. Over 205-225 (NFFYTEDPTVVQVFERVLSDQ) the chain is Cytoplasmic. Residues 226–246 (LLYSPISLYCFFMFSNYVMEG) form a helical membrane-spanning segment. Over 247 to 260 (GDKDTLGKKIQRLY) the chain is Vacuolar. A helical transmembrane segment spans residues 261 to 281 (ISTLGCNYLVWPMVQFINFLI). Residues 282-309 (MPRDFQAPFSSSVGVVWNCFLSMRNASK) lie on the Cytoplasmic side of the membrane.

The protein belongs to the peroxisomal membrane protein PXMP2/4 family. N-glycosylated.

Its subcellular location is the vacuole membrane. In Saccharomyces cerevisiae (strain ATCC 204508 / S288c) (Baker's yeast), this protein is Vacuolar membrane protein YOR292C.